We begin with the raw amino-acid sequence, 449 residues long: Protein tweety homolog 1 (449 aa).

The Extracellular portion of the chain corresponds to 1–43 (MSSSHGYRASWWTYILHQVPHTNFQFEVVDNQFAPQEWPYQQA). A helical membrane pass occupies residues 44-64 (LLFLASIAGLCLAISLILICV). Residues 65 to 86 (YLIRFCCCSSQEDDDSKSHRVC) lie on the Cytoplasmic side of the membrane. Residues 87-107 (CVTWSCVAAVIICCAGIGIGF) traverse the membrane as a helical segment. The Extracellular segment spans residues 108–212 (YGNSETNDGV…QVNFIEDYRW (105 aa)). The N-linked (GlcNAc...) asparagine glycan is linked to Asn-128. A helical membrane pass occupies residues 213–233 (LAYILLLLLDLIICLFTLLGL). At 234–238 (AKQIK) the chain is on the cytoplasmic side. Residues 239-259 (WLVIVMTVVSFFVLLLSWGSM) traverse the membrane as a helical segment. The Extracellular segment spans residues 260–388 (GLEMATAVGL…LKGLCYDGME (129 aa)). Cystine bridges form between Cys-273/Cys-383 and Cys-301/Cys-368. 2 N-linked (GlcNAc...) asparagine glycosylation sites follow: Asn-282 and Asn-353. Residues 389-409 (GILFLLLFSFLSALSFTAAIC) traverse the membrane as a helical segment. At 410-449 (SLPRAWKRFQNRDLDYDDMDEDDPFNPQESKRFVQWQSSI) the chain is on the cytoplasmic side.

The protein belongs to the tweety family. Homotetramer; disulfide-linked. Homodimer.

The protein resides in the cell membrane. The catalysed reaction is chloride(in) = chloride(out). It carries out the reaction L-glutamate(out) = L-glutamate(in). In terms of biological role, may act as a calcium-independent, swelling-dependent volume-regulated anion channel (VRAC-swell) which plays a pivotal role in the process of regulatory volume decrease (RVD) in the brain through the efflux of anions like chloride and organic osmolytes like glutamate. The chain is Protein tweety homolog 1 (ttyh1) from Xenopus tropicalis (Western clawed frog).